The following is a 693-amino-acid chain: Testis-specific Y-encoded-like protein 2 (693 aa).

2 disordered regions span residues 1-56 (MDRP…EAAQ) and 104-125 (GYGEAPPPTESLEALPTPEASG). Lysine 11 participates in a covalent cross-link: Glycyl lysine isopeptide (Lys-Gly) (interchain with G-Cter in SUMO2). 2 positions are modified to phosphoserine: serine 18 and serine 20. Residues 23–44 (RDPPPPPPPPPLLRLPLPPPQQ) show a composition bias toward pro residues. Residues lysine 163 and lysine 165 each participate in a glycyl lysine isopeptide (Lys-Gly) (interchain with G-Cter in SUMO2) cross-link. The segment at 175 to 207 (EDEDERESMRSSRRRRRRRRRKQRKVKRESRER) is disordered. Over residues 185-202 (SSRRRRRRRRRKQRKVKR) the composition is skewed to basic residues. Threonine 340 is subject to Phosphothreonine. Disordered regions lie at residues 474-605 (ENIC…DIEY) and 627-693 (ISDE…GKTG). Over residues 487-496 (VPNNETTDNN) the composition is skewed to polar residues. Over residues 509 to 519 (ESADDNNENPE) the composition is skewed to acidic residues. Residues 531–542 (NPNNNENTYGNN) are compositionally biased toward low complexity. Acidic residues-rich tracts occupy residues 559–602 (SDSD…DDRD) and 627–675 (ISDE…DLED). Phosphoserine is present on residues serine 658, serine 668, and serine 671.

It belongs to the nucleosome assembly protein (NAP) family. In terms of assembly, interacts with histones. Interacts with CASK. Part of a complex containing CASK, TBR1 and TSPYL2. Phosphorylation at Ser-20 and/or Thr-340 impairs function on cell proliferation. In terms of tissue distribution, ubiquitously expressed, with highest levels in brain, testis and heart, and lowest levels in liver and pancreas.

It localises to the nucleus. Its subcellular location is the cytoplasm. In terms of biological role, part of the CASK/TBR1/TSPYL2 transcriptional complex which modulates gene expression in response to neuronal synaptic activity, probably by facilitating nucleosome assembly. May inhibit cell proliferation by inducing p53-dependent CDKN1A expression. This is Testis-specific Y-encoded-like protein 2 (TSPYL2) from Homo sapiens (Human).